Consider the following 396-residue polypeptide: Stearoyl-[acyl-carrier-protein] 9-desaturase 2, chloroplastic (396 aa).

The transit peptide at 1–32 directs the protein to the chloroplast; that stretch reads MALRPNDVTLRLTPPLAAAARRNRRAAAGGVR. 6 residues coordinate Fe cation: E138, E176, H179, E229, E262, and H265.

It belongs to the fatty acid desaturase type 2 family. As to quaternary structure, homodimer. Fe(2+) is required as a cofactor.

The protein localises to the plastid. It is found in the chloroplast. The catalysed reaction is octadecanoyl-[ACP] + 2 reduced [2Fe-2S]-[ferredoxin] + O2 + 2 H(+) = (9Z)-octadecenoyl-[ACP] + 2 oxidized [2Fe-2S]-[ferredoxin] + 2 H2O. It participates in lipid metabolism; fatty acid metabolism. In terms of biological role, converts stearoyl-ACP to oleoyl-ACP by introduction of a cis double bond between carbons 9 and 10 of the acyl chain. Required for the repression of the salicylic acid (SA) signaling pathway. The sequence is that of Stearoyl-[acyl-carrier-protein] 9-desaturase 2, chloroplastic (SSI2) from Oryza sativa subsp. indica (Rice).